Reading from the N-terminus, the 85-residue chain is MRVLFLYGLCVRFLYFCLVLYFSPRLPSSGNRRCLYAICYMFNILWFFCVFCCVCFLNHLLFIVEGGGFIDLPGVKYFSRFFLNA.

This sequence belongs to the universal ribosomal protein uS12 family.

It localises to the mitochondrion matrix. It is found in the kinetoplast. Functionally, protein S12 is involved in the translation initiation step. This is Small ribosomal subunit protein uS12m (RPS12) from Leishmania tarentolae (Sauroleishmania tarentolae).